Here is a 181-residue protein sequence, read N- to C-terminus: Glutamyl-tRNA(Gln) amidotransferase subunit C, chloroplastic/mitochondrial (181 aa).

The protein belongs to the GatC family. As to quaternary structure, subunit of the heterotrimeric GatCAB amidotransferase (AdT) complex, composed of A, B and C subunits.

The protein localises to the mitochondrion. It is found in the plastid. The protein resides in the chloroplast. The catalysed reaction is L-glutamyl-tRNA(Gln) + L-glutamine + ATP + H2O = L-glutaminyl-tRNA(Gln) + L-glutamate + ADP + phosphate + H(+). In terms of biological role, allows the formation of correctly charged Gln-tRNA(Gln) through the transamidation of misacylated Glu-tRNA(Gln) in chloroplasts and mitochondria. The reaction takes place in the presence of glutamine and ATP through an activated gamma-phospho-Glu-tRNA(Gln). In Picea sitchensis (Sitka spruce), this protein is Glutamyl-tRNA(Gln) amidotransferase subunit C, chloroplastic/mitochondrial.